The primary structure comprises 425 residues: Glutamate-1-semialdehyde 2,1-aminomutase (425 aa).

Position 264 is an N6-(pyridoxal phosphate)lysine (Lys264).

Belongs to the class-III pyridoxal-phosphate-dependent aminotransferase family. HemL subfamily. In terms of assembly, homodimer. It depends on pyridoxal 5'-phosphate as a cofactor.

It is found in the cytoplasm. The enzyme catalyses (S)-4-amino-5-oxopentanoate = 5-aminolevulinate. The protein operates within porphyrin-containing compound metabolism; protoporphyrin-IX biosynthesis; 5-aminolevulinate from L-glutamyl-tRNA(Glu): step 2/2. The protein is Glutamate-1-semialdehyde 2,1-aminomutase of Leptospira biflexa serovar Patoc (strain Patoc 1 / Ames).